We begin with the raw amino-acid sequence, 1008 residues long: Collagen alpha-1(I) chain (1008 aa).

The disordered stretch occupies residues Gly-1–Pro-1008. 4-hydroxyproline is present on residues Pro-18, Pro-21, Pro-23, Pro-32, Pro-35, Pro-38, Pro-52, Pro-67, Pro-73, Pro-82, and Pro-88. Residues Asn-55–Glu-69 are compositionally biased toward basic and acidic residues. Lys-91 carries the post-translational modification 5-hydroxylysine; alternate. O-linked (Gal...) hydroxylysine; alternate glycosylation occurs at Lys-91. Residue Ser-97 is modified to Phosphoserine. A compositionally biased stretch (low complexity) spans Asp-105–Asn-121. 4-hydroxyproline occurs at positions 115, 118, 124, 133, 139, 160, 169, 172, 199, 202, 214, 220, 229, 235, and 238. Positions Pro-139–Ala-157 are enriched in low complexity. Over residues Pro-159 to Phe-171 the composition is skewed to pro residues. The segment covering Ala-205 to Pro-235 has biased composition (low complexity). The segment covering Gly-236–Gly-255 has biased composition (gly residues). A 5-hydroxylysine modification is found at Lys-254. 4-hydroxyproline is present on residues Pro-260, Pro-263, Pro-275, Pro-284, Pro-299, Pro-305, Pro-314, and Pro-320. Gly residues predominate over residues Gly-309–Gly-318. Residue Lys-329 is modified to 5-hydroxylysine. 4-hydroxyproline is present on residues Pro-338, Pro-347, Pro-353, Pro-359, Pro-368, Pro-371, Pro-380, Pro-389, Pro-395, Pro-407, Pro-416, Pro-425, Pro-428, Pro-446, Pro-463, Pro-469, Pro-475, Pro-481, Pro-487, Pro-493, Pro-505, Pro-514, Pro-523, Pro-535, Pro-538, Pro-544, Pro-550, and Pro-559. Low complexity predominate over residues Lys-362–Arg-388. A compositionally biased stretch (low complexity) spans Ala-397–Pro-416. The span at Pro-475–Gln-484 shows a compositional bias: low complexity. Positions Pro-519 to Gln-547 are enriched in low complexity. Position 571 is a 5-hydroxylysine (Lys-571). Residues Pro-577, Pro-592, and Pro-598 each carry the 4-hydroxyproline modification. Residues Ser-604–Ala-618 are compositionally biased toward low complexity. The residue at position 607 (Ser-607) is a Phosphoserine. A 4-hydroxyproline mark is found at Pro-619, Pro-625, Pro-628, Pro-637, Pro-643, Pro-661, Pro-670, and Pro-679. A compositionally biased stretch (low complexity) spans Ala-631–Ala-658. Residues Pro-660–Pro-672 show a composition bias toward pro residues. A 5-hydroxylysine modification is found at Lys-682. The segment covering Ser-687–Val-703 has biased composition (low complexity). 2 positions are modified to 4-hydroxyproline: Pro-691 and Pro-697. Pro-705 carries the 3-hydroxyproline modification. 4-hydroxyproline is present on residues Pro-706, Pro-717, Pro-738, Pro-747, Pro-755, Pro-764, Pro-781, Pro-790, Pro-793, Pro-799, Pro-814, Pro-820, Pro-826, Pro-835, and Pro-841. Residues Glu-731 to Glu-740 show a composition bias toward low complexity. Residues Lys-752–Pro-764 show a composition bias toward low complexity. Residues Pro-813–Ala-823 show a composition bias toward pro residues. Low complexity predominate over residues Pro-825–Ser-840. Lys-850 carries the post-translational modification 5-hydroxylysine. Residues Pro-858–Val-873 are compositionally biased toward pro residues. Pro-861, Pro-864, and Pro-867 each carry 4-hydroxyproline. Residues Ala-894–Pro-908 show a composition bias toward low complexity. A compositionally biased stretch (basic and acidic residues) spans Arg-909–Ile-923. A 5-hydroxylysine modification is found at Lys-912. At Lys-924 the chain carries 5-hydroxylysine; alternate. The O-linked (Gal...) hydroxylysine; alternate glycan is linked to Lys-924. 4 positions are modified to 4-hydroxyproline: Pro-939, Pro-942, Pro-960, and Pro-975. The span at Pro-942 to Pro-975 shows a compositional bias: low complexity. Position 980 is a 3-hydroxyproline (Pro-980). A 4-hydroxyproline modification is found at Pro-981. A compositionally biased stretch (pro residues) spans Val-993–Pro-1008. 3-hydroxyproline is present on Pro-995. Pro-996 is subject to 4-hydroxyproline. Pro-998 carries the 3-hydroxyproline modification. Pro-999 bears the 4-hydroxyproline mark. Residue Pro-1001 is modified to 3-hydroxyproline. 4-hydroxyproline is present on residues Pro-1002, Pro-1005, and Pro-1008.

The protein belongs to the fibrillar collagen family. In terms of assembly, trimers of one alpha 2(I) and two alpha 1(I) chains. Post-translationally, contains mostly 4-hydroxyproline. Proline residues at the third position of the tripeptide repeating unit (G-X-Y) are hydroxylated in some or all of the chains. Contains 3-hydroxyproline at a few sites. This modification occurs on the first proline residue in the sequence motif Gly-Pro-Hyp, where Hyp is 4-hydroxyproline. In terms of processing, lysine residues at the third position of the tripeptide repeating unit (G-X-Y) are 5-hydroxylated in some or all of the chains. Post-translationally, O-glycosylated on hydroxylated lysine residues. The O-linked glycan consists of a Glc-Gal disaccharide. As to expression, expressed in bones.

The protein resides in the secreted. Its subcellular location is the extracellular space. It is found in the extracellular matrix. Functionally, type I collagen is a member of group I collagen (fibrillar forming collagen). This is Collagen alpha-1(I) chain from Paramylodon harlani (Harlan's ground sloth).